The sequence spans 94 residues: Large ribosomal subunit protein bL25 (94 aa).

The protein belongs to the bacterial ribosomal protein bL25 family. Part of the 50S ribosomal subunit; part of the 5S rRNA/L5/L18/L25 subcomplex. Contacts the 5S rRNA. Binds to the 5S rRNA independently of L5 and L18.

Its function is as follows. This is one of the proteins that binds to the 5S RNA in the ribosome where it forms part of the central protuberance. In Erwinia tasmaniensis (strain DSM 17950 / CFBP 7177 / CIP 109463 / NCPPB 4357 / Et1/99), this protein is Large ribosomal subunit protein bL25.